The sequence spans 420 residues: Histidine--tRNA ligase (420 aa).

The protein belongs to the class-II aminoacyl-tRNA synthetase family. Homodimer.

The protein localises to the cytoplasm. The enzyme catalyses tRNA(His) + L-histidine + ATP = L-histidyl-tRNA(His) + AMP + diphosphate + H(+). This Nitrosomonas europaea (strain ATCC 19718 / CIP 103999 / KCTC 2705 / NBRC 14298) protein is Histidine--tRNA ligase.